Here is a 385-residue protein sequence, read N- to C-terminus: MSKLDFVEAELEKRRAASRLRTLRPVAPADGAAVTINGARLLNVCSNDYLGLSCHPLLVERAQAFAAQWGAGATASRLVCGNYTCFDRVEEKLARLKQTPAALVLNSGYQANTTLLPALCDRDSLILSDRLNHNSIIMGCRLARCAVTLFDHNDPAHLEKLLVETANRGFSRRLIVTESVFSMDGDCCDMDALAGLAQAHDALLMVDEAHATGVFGEQGMGLTCGKPVDVVMGTFGKGCGSFGAYVACSSALRDFFVNRCAGFIYSTGLPPAVLGSIDAALDLVPAMDAERQTLLDNAAHLRVRLATFGFDTGASSSQILPVIVGSEQAALDLSRFLEGRGFLAVAIRPPSVPEAQSRIRVSLSALHTRADVDRLADAFGAWRRP.

Arg-21 lines the substrate pocket. A pyridoxal 5'-phosphate-binding site is contributed by 108-109; that stretch reads GY. Position 133 (His-133) interacts with substrate. Pyridoxal 5'-phosphate-binding positions include Ser-182, 207 to 210, and 234 to 237; these read DEAH and TFGK. The residue at position 237 (Lys-237) is an N6-(pyridoxal phosphate)lysine. Ser-351 lines the substrate pocket.

This sequence belongs to the class-II pyridoxal-phosphate-dependent aminotransferase family. BioF subfamily. As to quaternary structure, homodimer. The cofactor is pyridoxal 5'-phosphate.

The catalysed reaction is 6-carboxyhexanoyl-[ACP] + L-alanine + H(+) = (8S)-8-amino-7-oxononanoate + holo-[ACP] + CO2. Its pathway is cofactor biosynthesis; biotin biosynthesis. Functionally, catalyzes the decarboxylative condensation of pimeloyl-[acyl-carrier protein] and L-alanine to produce 8-amino-7-oxononanoate (AON), [acyl-carrier protein], and carbon dioxide. In Desulfosudis oleivorans (strain DSM 6200 / JCM 39069 / Hxd3) (Desulfococcus oleovorans), this protein is Putative 8-amino-7-oxononanoate synthase (bioF).